Reading from the N-terminus, the 606-residue chain is Albumin A (606 aa).

An N-terminal signal peptide occupies residues 1 to 18; sequence MKWITLICLLISSTLIES. Positions 19 to 24 are excised as a propeptide; it reads RIIFKR. 3 consecutive Albumin domains span residues 22-211, 212-401, and 402-599; these read FKRD…ELMK, HSHS…RFMN, and EAKE…VLIE. Position 30 (His30) interacts with Cu cation. 17 cysteine pairs are disulfide-bonded: Cys80–Cys89, Cys102–Cys118, Cys117–Cys128, Cys148–Cys193, Cys192–Cys201, Cys224–Cys270, Cys269–Cys277, Cys289–Cys303, Cys302–Cys313, Cys340–Cys383, Cys382–Cys391, Cys414–Cys460, Cys459–Cys470, Cys483–Cys499, Cys498–Cys509, Cys536–Cys581, and Cys580–Cys589.

The protein belongs to the ALB/AFP/VDB family. As to expression, plasma.

The protein resides in the secreted. Functionally, binds water, Ca(2+), Na(+), K(+), fatty acids, hormones, bilirubin and drugs. Its main function is the regulation of the colloidal osmotic pressure of blood. The protein is Albumin A (alb-a) of Xenopus laevis (African clawed frog).